Consider the following 235-residue polypeptide: MNFNYFILVLFFITSGHAKSETRDVHQEAENHIKRGSNTGFNFKTLDKEKRSAEEQNLAEDLVKRGSNKGFNFMVDMIQALSNGKRSAEEQDLAEDLVTRGSNKGFNFMVDMINALSNGKRSAEEQDLAEDLVKRGSNKGFNFMVDMINALSNGKRSAEEQDLAEDLVTRRSNKGFNFMVDMIQALSKGKRSAEDQDLAEDLVTRGSNKGFNFMVDMIQALSKGKRSAEQEKDMK.

An N-terminal signal peptide occupies residues Met1 to Ala18. 2 consecutive propeptides follow at residues Lys19 to Arg35 and Ser52 to Arg65. Position 83 is an asparagine amide (Asn83). A propeptide spanning residues Ser87–Arg100 is cleaved from the precursor. Asn118 bears the Asparagine amide mark. A propeptide spanning residues Ser122–Arg135 is cleaved from the precursor. Asn153 carries the post-translational modification Asparagine amide. A propeptide spanning residues Ser157–Arg170 is cleaved from the precursor. At Lys188 the chain carries Lysine amide. A propeptide spanning residues Ser192–Arg205 is cleaved from the precursor. Lys223 carries the lysine amide modification. Positions Ser227–Lys235 are excised as a propeptide.

It belongs to the maximin-S family. As to expression, expressed by the skin dorsal glands.

It localises to the secreted. Maximin-S1 has no antimicrobial activity. Has no hemolytic activity. In terms of biological role, maximin-S2 has an activity against mycoplasma but has no activity against common Gram-positive and Gram-negative bacteria nor fungi. Has no hemolytic activity. Functionally, maximin-S3 has an activity against mycoplasma but has no activity against common Gram-positive and Gram-negative bacteria nor fungi. Has no hemolytic activity. Its function is as follows. Maximin-S4 has an activity against mycoplasma but has no activity against common Gram-positive and Gram-negative bacteria nor fungi. Has no hemolytic activity. Maximin-S5 has an activity against mycoplasma but has no activity against common Gram-positive and Gram-negative bacteria nor fungi. Has no hemolytic activity. In Bombina maxima (Giant fire-bellied toad), this protein is Maximins-S type A.